The chain runs to 551 residues: Dihydroxy-acid dehydratase (551 aa).

D78 is a binding site for Mg(2+). Position 119 (C119) interacts with [2Fe-2S] cluster. D120 and K121 together coordinate Mg(2+). N6-carboxylysine is present on K121. A [2Fe-2S] cluster-binding site is contributed by C191. Residue E441 coordinates Mg(2+). S467 (proton acceptor) is an active-site residue.

Belongs to the IlvD/Edd family. In terms of assembly, homodimer. It depends on [2Fe-2S] cluster as a cofactor. Requires Mg(2+) as cofactor.

It catalyses the reaction (2R)-2,3-dihydroxy-3-methylbutanoate = 3-methyl-2-oxobutanoate + H2O. The catalysed reaction is (2R,3R)-2,3-dihydroxy-3-methylpentanoate = (S)-3-methyl-2-oxopentanoate + H2O. It participates in amino-acid biosynthesis; L-isoleucine biosynthesis; L-isoleucine from 2-oxobutanoate: step 3/4. The protein operates within amino-acid biosynthesis; L-valine biosynthesis; L-valine from pyruvate: step 3/4. Functionally, functions in the biosynthesis of branched-chain amino acids. Catalyzes the dehydration of (2R,3R)-2,3-dihydroxy-3-methylpentanoate (2,3-dihydroxy-3-methylvalerate) into 2-oxo-3-methylpentanoate (2-oxo-3-methylvalerate) and of (2R)-2,3-dihydroxy-3-methylbutanoate (2,3-dihydroxyisovalerate) into 2-oxo-3-methylbutanoate (2-oxoisovalerate), the penultimate precursor to L-isoleucine and L-valine, respectively. This chain is Dihydroxy-acid dehydratase, found in Pyrococcus furiosus (strain ATCC 43587 / DSM 3638 / JCM 8422 / Vc1).